The chain runs to 542 residues: TOM1-like protein 7 (542 aa).

The VHS domain maps to 29–158; it reads ATSELLRTPD…ELKRCGVKFP (130 aa). Phosphoserine is present on Ser-161. Residues 201–289 enclose the GAT domain; sequence EIESLSLSSL…VLARHDAIAS (89 aa). A disordered region spans residues 303–340; the sequence is RETSSSLKTCGAAALESADSESSSSSSSSESETDEVED. A compositionally biased stretch (low complexity) spans 314–332; that stretch reads AAALESADSESSSSSSSSE. At Ser-521 the chain carries Phosphoserine. The disordered stretch occupies residues 522–542; it reads FPARATGTSGAATAATVDRQP. Low complexity predominate over residues 524–542; the sequence is ARATGTSGAATAATVDRQP.

This sequence belongs to the TOM1 family. Preferentially expressed in flowers.

It is found in the membrane. Functionally, might contribute to the loading of the ESCRT machinery. The polypeptide is TOM1-like protein 7 (Arabidopsis thaliana (Mouse-ear cress)).